The sequence spans 372 residues: tRNA-specific 2-thiouridylase MnmA (372 aa).

Residues 9 to 16 (GLSGGVDS) and Met-35 contribute to the ATP site. The segment at 95–97 (NPD) is interaction with target base in tRNA. The active-site Nucleophile is the Cys-100. Cys-100 and Cys-198 are joined by a disulfide. Position 124 (Gly-124) interacts with ATP. Residues 148–150 (KDQ) form an interaction with tRNA region. The active-site Cysteine persulfide intermediate is the Cys-198. The tract at residues 317 to 318 (RY) is interaction with tRNA.

The protein belongs to the MnmA/TRMU family.

It is found in the cytoplasm. It catalyses the reaction S-sulfanyl-L-cysteinyl-[protein] + uridine(34) in tRNA + AH2 + ATP = 2-thiouridine(34) in tRNA + L-cysteinyl-[protein] + A + AMP + diphosphate + H(+). Catalyzes the 2-thiolation of uridine at the wobble position (U34) of tRNA, leading to the formation of s(2)U34. The protein is tRNA-specific 2-thiouridylase MnmA of Delftia acidovorans (strain DSM 14801 / SPH-1).